Reading from the N-terminus, the 61-residue chain is Large ribosomal subunit protein eL29 (61 aa).

A compositionally biased stretch (basic residues) spans 1-26; it reads MAKSKNHTNHNQNKKAHRNGIKRPQK. Positions 1–32 are disordered; the sequence is MAKSKNHTNHNQNKKAHRNGIKRPQKHRYDSL.

It belongs to the eukaryotic ribosomal protein eL29 family. In terms of assembly, component of the large ribosomal subunit (LSU). Mature yeast ribosomes consist of a small (40S) and a large (60S) subunit. The 40S small subunit contains 1 molecule of ribosomal RNA (18S rRNA) and at least 33 different proteins. The large 60S subunit contains 3 rRNA molecules (25S, 5.8S and 5S rRNA) and at least 46 different proteins.

Its subcellular location is the cytoplasm. The protein resides in the nucleus. The protein localises to the nucleolus. In terms of biological role, component of the ribosome, a large ribonucleoprotein complex responsible for the synthesis of proteins in the cell. The small ribosomal subunit (SSU) binds messenger RNAs (mRNAs) and translates the encoded message by selecting cognate aminoacyl-transfer RNA (tRNA) molecules. The large subunit (LSU) contains the ribosomal catalytic site termed the peptidyl transferase center (PTC), which catalyzes the formation of peptide bonds, thereby polymerizing the amino acids delivered by tRNAs into a polypeptide chain. The nascent polypeptides leave the ribosome through a tunnel in the LSU and interact with protein factors that function in enzymatic processing, targeting, and the membrane insertion of nascent chains at the exit of the ribosomal tunnel. In Schizosaccharomyces pombe (strain 972 / ATCC 24843) (Fission yeast), this protein is Large ribosomal subunit protein eL29 (rpl29).